The primary structure comprises 450 residues: uncharacterized protein (450 aa).

Residues 141 to 151 (WLDKTDGEKNS) show a composition bias toward basic and acidic residues. Disordered stretches follow at residues 141–171 (WLDKTDGEKNSEASSTDNSLENSTKGADSAG), 276–298 (LQDSENVQGDKGEKESKDDAVSQ), and 395–416 (DDEDEDNVDNSEGDEESLLSRN). A compositionally biased stretch (polar residues) spans 152–171 (EASSTDNSLENSTKGADSAG). The span at 283-298 (QGDKGEKESKDDAVSQ) shows a compositional bias: basic and acidic residues. The segment covering 395 to 411 (DDEDEDNVDNSEGDEES) has biased composition (acidic residues).

This is an uncharacterized protein from Saccharomyces cerevisiae (strain ATCC 204508 / S288c) (Baker's yeast).